We begin with the raw amino-acid sequence, 247 residues long: tRNA pseudouridine synthase A (247 aa).

Aspartate 53 acts as the Nucleophile in catalysis. Tyrosine 111 is a binding site for substrate.

Belongs to the tRNA pseudouridine synthase TruA family. Homodimer.

It carries out the reaction uridine(38/39/40) in tRNA = pseudouridine(38/39/40) in tRNA. Its function is as follows. Formation of pseudouridine at positions 38, 39 and 40 in the anticodon stem and loop of transfer RNAs. This chain is tRNA pseudouridine synthase A, found in Bacillus licheniformis (strain ATCC 14580 / DSM 13 / JCM 2505 / CCUG 7422 / NBRC 12200 / NCIMB 9375 / NCTC 10341 / NRRL NRS-1264 / Gibson 46).